Here is a 156-residue protein sequence, read N- to C-terminus: MSRRNRAPRRDVPPDPKYGSRLVTMLIRKLMMRGKASLAARILYEALDIVRERTGQDPLPLLENAVRNATPLVEVKARRVGGATYQVPVEVRGERGTSLALRWLVTFSRTRPGRTMAAKLANELIDAANETGSAIRRREEVHRMAEANKAFAHYRY.

This sequence belongs to the universal ribosomal protein uS7 family. Part of the 30S ribosomal subunit. Contacts proteins S9 and S11.

Functionally, one of the primary rRNA binding proteins, it binds directly to 16S rRNA where it nucleates assembly of the head domain of the 30S subunit. Is located at the subunit interface close to the decoding center, probably blocks exit of the E-site tRNA. The chain is Small ribosomal subunit protein uS7 from Synechococcus sp. (strain JA-2-3B'a(2-13)) (Cyanobacteria bacterium Yellowstone B-Prime).